The following is a 364-amino-acid chain: DNA polymerase IV (364 aa).

One can recognise a UmuC domain in the interval 8–189; that stretch reads IIHIDMDCYF…LPLTKIPGVG (182 aa). Residues aspartate 12 and aspartate 107 each coordinate Mg(2+). The active site involves glutamate 108.

It belongs to the DNA polymerase type-Y family. As to quaternary structure, monomer. The cofactor is Mg(2+).

It localises to the cytoplasm. It carries out the reaction DNA(n) + a 2'-deoxyribonucleoside 5'-triphosphate = DNA(n+1) + diphosphate. Its function is as follows. Poorly processive, error-prone DNA polymerase involved in untargeted mutagenesis. Copies undamaged DNA at stalled replication forks, which arise in vivo from mismatched or misaligned primer ends. These misaligned primers can be extended by PolIV. Exhibits no 3'-5' exonuclease (proofreading) activity. May be involved in translesional synthesis, in conjunction with the beta clamp from PolIII. The polypeptide is DNA polymerase IV (Shewanella woodyi (strain ATCC 51908 / MS32)).